The primary structure comprises 647 residues: DNA polymerase subunit gamma-1 (647 aa).

Positions 116–147 are disordered; the sequence is ERPGRAEQSQMQDEDGLPELVEESSQPSFHHG. Positions 127–137 are enriched in acidic residues; the sequence is QDEDGLPELVE.

It belongs to the DNA polymerase type-A family. As to quaternary structure, heterotrimer composed of a catalytic subunit and a homodimer of accessory subunits. Interacts with TTC3. The cofactor is Mg(2+).

The protein resides in the mitochondrion. Its subcellular location is the mitochondrion matrix. It localises to the mitochondrion nucleoid. The enzyme catalyses DNA(n) + a 2'-deoxyribonucleoside 5'-triphosphate = DNA(n+1) + diphosphate. Its function is as follows. Involved in the replication of mitochondrial DNA. Associates with mitochondrial DNA. The sequence is that of DNA polymerase subunit gamma-1 (POLG) from Gallus gallus (Chicken).